The sequence spans 1902 residues: PII-type proteinase (1902 aa).

Residues 1 to 33 (MQRKKKGLSILLAGTVALGALAVLPVGEIQAKA) form the signal peptide. Residues 34 to 187 (AISQQTKVSS…VTLAKVYYPT (154 aa)) constitute a propeptide that is removed on maturation. In terms of domain architecture, Peptidase S8 spans 191-697 (ANSMANVQAV…AGLVDVKAAI (507 aa)). Active-site charge relay system residues include D217, H281, and S620. Low complexity predominate over residues 1793 to 1805 (KTAGKGDDTTGTS). A disordered region spans residues 1793 to 1872 (KTAGKGDDTT…GKGALPKTAE (80 aa)). The short motif at 1867–1871 (LPKTA) is the LPXTG sorting signal element. T1870 is subject to Pentaglycyl murein peptidoglycan amidated threonine. A propeptide spans 1871 to 1902 (AETTERPAFGFLGVIVVSLMGVLGLKRKQREE) (removed by sortase).

This sequence belongs to the peptidase S8 family.

It localises to the secreted. Its subcellular location is the cell wall. It catalyses the reaction Endopeptidase activity with very broad specificity, although some subsite preference have been noted, e.g. large hydrophobic residues in the P1 and P4 positions, and Pro in the P2 position. Best known for its action on caseins, although it has been shown to hydrolyze hemoglobin and oxidized insulin B-chain.. Protease which breaks down milk proteins during the growth of the bacteria on milk. The sequence is that of PII-type proteinase (prtP) from Lacticaseibacillus paracasei (Lactobacillus paracasei).